The following is a 452-amino-acid chain: 2-succinylbenzoate--CoA ligase (452 aa).

It belongs to the ATP-dependent AMP-binding enzyme family. MenE subfamily.

The catalysed reaction is 2-succinylbenzoate + ATP + CoA = 2-succinylbenzoyl-CoA + AMP + diphosphate. The protein operates within quinol/quinone metabolism; 1,4-dihydroxy-2-naphthoate biosynthesis; 1,4-dihydroxy-2-naphthoate from chorismate: step 5/7. It participates in quinol/quinone metabolism; menaquinone biosynthesis. In terms of biological role, converts 2-succinylbenzoate (OSB) to 2-succinylbenzoyl-CoA (OSB-CoA). This Haemophilus influenzae (strain ATCC 51907 / DSM 11121 / KW20 / Rd) protein is 2-succinylbenzoate--CoA ligase.